Consider the following 62-residue polypeptide: MARKCYVTGKSPKSGNNRSHALNKTKRTWGVNVQKVRILVDGKPKRVWVSARALKSGLVERV.

Positions 1–26 (MARKCYVTGKSPKSGNNRSHALNKTK) are disordered. The segment covering 11-20 (SPKSGNNRSH) has biased composition (polar residues).

The protein belongs to the bacterial ribosomal protein bL28 family.

The polypeptide is Large ribosomal subunit protein bL28 (Exiguobacterium sp. (strain ATCC BAA-1283 / AT1b)).